The chain runs to 75 residues: Probable pilin MJ1469 (75 aa).

Positions 1 to 11 (MKPKKIISNKA) are excised as a propeptide. Positions 12–20 (QISLELALL) match the QXSXEXXXL motif.

The N-terminus is cleaved by the prepilin peptidase EppA, which recognizes the class III signal sequence.

It localises to the secreted. The protein resides in the cell surface. The protein localises to the fimbrium. In Methanocaldococcus jannaschii (strain ATCC 43067 / DSM 2661 / JAL-1 / JCM 10045 / NBRC 100440) (Methanococcus jannaschii), this protein is Probable pilin MJ1469.